The sequence spans 559 residues: Germacrene A synthase (559 aa).

Residues D312, D316, D456, T460, and E464 each coordinate Mg(2+). The DDXXD motif motif lies at 312–316; it reads DDTYD.

This sequence belongs to the terpene synthase family. Monomer. Mg(2+) serves as cofactor. In terms of tissue distribution, expressed in glandular trichomes of all aerial tissues, with highest levels in tissues accumulating parthenolide (e.g. flowers and, to some extent, leaves).

The catalysed reaction is (2E,6E)-farnesyl diphosphate = (+)-(R)-germacrene A + diphosphate. It participates in secondary metabolite biosynthesis; terpenoid biosynthesis. Its function is as follows. Sesquiterpene synthase involved in germacrene A biosynthesis. Germacrene A is a precursor of several sesquiterpene lactones. The sequence is that of Germacrene A synthase from Tanacetum parthenium (Feverfew).